Here is a 241-residue protein sequence, read N- to C-terminus: Uridylate kinase (241 aa).

Lys15 to Gly18 is an ATP binding site. Positions Gly23–Gly28 are involved in allosteric activation by GTP. Gly57 is a binding site for UMP. ATP contacts are provided by Gly58 and Arg62. Residues Asp77 and Thr138–Thr145 contribute to the UMP site. Residues Thr165, Phe171, and Asp174 each coordinate ATP.

It belongs to the UMP kinase family. In terms of assembly, homohexamer.

Its subcellular location is the cytoplasm. The catalysed reaction is UMP + ATP = UDP + ADP. It functions in the pathway pyrimidine metabolism; CTP biosynthesis via de novo pathway; UDP from UMP (UMPK route): step 1/1. Allosterically activated by GTP. Inhibited by UTP. Functionally, catalyzes the reversible phosphorylation of UMP to UDP. This Klebsiella pneumoniae subsp. pneumoniae (strain ATCC 700721 / MGH 78578) protein is Uridylate kinase.